We begin with the raw amino-acid sequence, 183 residues long: GTP cyclohydrolase 1 (183 aa).

Residues C71, H74, and C142 each coordinate Zn(2+).

Belongs to the GTP cyclohydrolase I family. In terms of assembly, toroid-shaped homodecamer, composed of two pentamers of five dimers.

The catalysed reaction is GTP + H2O = 7,8-dihydroneopterin 3'-triphosphate + formate + H(+). Its pathway is cofactor biosynthesis; 7,8-dihydroneopterin triphosphate biosynthesis; 7,8-dihydroneopterin triphosphate from GTP: step 1/1. The polypeptide is GTP cyclohydrolase 1 (Leptospira interrogans serogroup Icterohaemorrhagiae serovar copenhageni (strain Fiocruz L1-130)).